The sequence spans 507 residues: Nucleoporin p54 (507 aa).

Repeat copies occupy residues 5-6 (FG), 25-26 (FG), 28-29 (FG), 53-54 (FG), 61-62 (FG), 63-64 (FG), 67-68 (FG), 87-88 (FG), and 444-445 (FG). The interval 5–445 (FGAPSGTSGT…SQIRMQNHFG (441 aa)) is 9 X 2 AA repeats of F-G.

It belongs to the NUP54 family. Component of the p62 complex, a complex composed of NUP62, NUP54, and the isoform p58 and isoform p45 of NUP58. Interacts with NUTF2. In terms of processing, O-glycosylated.

The protein resides in the nucleus. The protein localises to the nuclear pore complex. It is found in the nucleus membrane. Component of the nuclear pore complex, a complex required for the trafficking across the nuclear membrane. The polypeptide is Nucleoporin p54 (NUP54) (Homo sapiens (Human)).